We begin with the raw amino-acid sequence, 861 residues long: MNNPSTTKAPLADYLAHLPLAEEERERLGESASFSELHARLAGAEGAAADAGGDPALASVRARLQLGTPELDDAEMFGVDAQGRTFLKISPPIRRTKVIPEPWRTNILVRGWRRLTGRSNPPKPKRALPRARWQRVGSLRRFILLLLMLAQTSVATYYMKGILPYQGWAFVDLEELAQQSLLDTVQQVLPYVIQFGILALFAILFCWVSAGFWTALMGFWELLTGRDRYRISGSSAGSEPIAADARTAIVMPICNEDVPRVFAGLRATVESMAATGEMERFDFFVLSDTNDPDIAVAEQQAWLELCRETKGFGKIFYRRRRRRVKRKSGNIDDFCRRWGGDYRYMVVMDADSVMSGDCLAKLVRLMEANPEAGIIQTAPKASGMDTLYARMQQFATRVYGPLFTAGLHFWQLGESHYWGHNAIIRMQPFIDHCALAPLPGKGSFAGAILSHDFVEAALMRRAGWGVWIAYDLDGSYEELPPNLLDELKRDRRWCHGNLMNFRLFLVKGMHPVHRAVFLTGVMSYLSAPLWFFFLVLSTALLAVHQLMEPQYFLEPRQLFPIWPQWHPEKAIALFSTTLTLLFLPKLLSVMLIWAKGAKGFGGVIRVTLSMLLEMFFSVLLAPVRMLFHTRFVLAAFLGWSVQWNSPQRDDDATPWSEAIRRHGMQTLLGIAWTLLVAWLNPRFLWWLSPIVGSLILSIPVSVISSRVKLGLRARDEKLFLIPEEYDTPRELRATDEYTYENRWHALKDGFLKAAVDPLLNALACAMGTARHNRAQAIETVRGERIGKAIEKGPEQLDGATRLALLSDPVALSRLHTRVWEEDRDDWLGRWRKAEADDPHAASVPLAQVVPGDAGLLPAAQS.

Helical transmembrane passes span 142-162 (FILL…MKGI), 188-208 (VLPY…FCWV), 516-536 (VFLT…FLVL), 573-593 (LFST…MLIW), 600-620 (FGGV…SVLL), and 683-703 (FLWW…VSVI).

It belongs to the glycosyltransferase 2 family. OpgH subfamily.

The protein localises to the cell inner membrane. Its pathway is glycan metabolism; osmoregulated periplasmic glucan (OPG) biosynthesis. Its function is as follows. Involved in the biosynthesis of osmoregulated periplasmic glucans (OPGs). The chain is Glucans biosynthesis glucosyltransferase H from Pseudomonas aeruginosa (strain UCBPP-PA14).